A 396-amino-acid chain; its full sequence is Na(+)/H(+) antiporter NhaA (396 aa).

11 helical membrane-spanning segments follow: residues 14–34 (ASGI…NSGL), 59–79 (LLLW…GLEV), 95–115 (TFPA…YTFF), 124–144 (AGWA…MALL), 154–174 (VFLL…IALF), 178–198 (QLSL…LWMN), 205–225 (IGLY…SGVH), 254–274 (ALHP…NAGV), 278–298 (GIGL…GLFV), 328–348 (IFAV…IASL), and 363–383 (LGIL…LRMS).

This sequence belongs to the NhaA Na(+)/H(+) (TC 2.A.33) antiporter family.

The protein resides in the cell inner membrane. The catalysed reaction is Na(+)(in) + 2 H(+)(out) = Na(+)(out) + 2 H(+)(in). Functionally, na(+)/H(+) antiporter that extrudes sodium in exchange for external protons. The chain is Na(+)/H(+) antiporter NhaA from Aeromonas salmonicida (strain A449).